Here is a 196-residue protein sequence, read N- to C-terminus: Peptidyl-tRNA hydrolase (196 aa).

Tyr18 is a tRNA binding site. The active-site Proton acceptor is His23. TRNA-binding residues include Phe69, Asn71, and Asn117.

It belongs to the PTH family. Monomer.

The protein resides in the cytoplasm. It catalyses the reaction an N-acyl-L-alpha-aminoacyl-tRNA + H2O = an N-acyl-L-amino acid + a tRNA + H(+). Its function is as follows. Hydrolyzes ribosome-free peptidyl-tRNAs (with 1 or more amino acids incorporated), which drop off the ribosome during protein synthesis, or as a result of ribosome stalling. In terms of biological role, catalyzes the release of premature peptidyl moieties from peptidyl-tRNA molecules trapped in stalled 50S ribosomal subunits, and thus maintains levels of free tRNAs and 50S ribosomes. The chain is Peptidyl-tRNA hydrolase from Aliivibrio salmonicida (strain LFI1238) (Vibrio salmonicida (strain LFI1238)).